Consider the following 991-residue polypeptide: Pentatricopeptide repeat-containing protein At1g73710 (991 aa).

Disordered stretches follow at residues 1 to 27 and 61 to 81; these read MLQP…HHHH and SSSS…RKRK. Residues 15 to 27 are compositionally biased toward basic residues; that stretch reads VRHHHHHHHHHHH. The segment covering 61–73 has biased composition (low complexity); the sequence is SSSSVSPPRCSKP. PPR repeat units follow at residues 144-178, 179-213, 214-248, 304-338, 339-373, 374-408, 409-443, 444-474, 478-513, 514-548, 549-583, 584-618, 619-653, 654-688, 689-719, 723-757, 758-792, 862-896, and 897-931; these read NVIH…GVLP, TNNT…MHFP, DEVT…KVDL, LTST…GVPI, DTVT…GISP, DTKT…GLFP, DTVT…SIRI, DEHS…FQLD, SSTT…GQRN, DVLE…GTWP, DECT…GCKP, GCKT…GVKP, NEVV…GVQS, NHIV…EGGP, DVAA…LREK, DVIS…GLLS, DCTS…RKLL, EHFA…GLEP, and DIVT…ELEP. Over residues 965 to 974 the composition is skewed to basic and acidic residues; sequence AERECSSRSG. A disordered region spans residues 965 to 991; that stretch reads AERECSSRSGEEEEDDEEENSEEDEAF. Residues 975-991 show a composition bias toward acidic residues; that stretch reads EEEEDDEEENSEEDEAF.

Belongs to the PPR family. P subfamily.

The protein is Pentatricopeptide repeat-containing protein At1g73710 of Arabidopsis thaliana (Mouse-ear cress).